The following is a 963-amino-acid chain: Putative RNA Helicase B962L (963 aa).

Residues 43–229 (IPTSLADRVL…FGIGKENIIL (187 aa)) form the Helicase ATP-binding domain. Position 56–63 (56–63 (SRTGSGKS)) interacts with ATP. Positions 167-170 (DEAH) match the DEAH box motif. The Helicase C-terminal domain maps to 253–459 (ACETALTIHK…TIKKNKEGVF (207 aa)). A helical membrane pass occupies residues 521 to 541 (GYFWQAAISDIATILAVVSVV).

This sequence belongs to the DEAD box helicase family. DEAH subfamily.

It localises to the host membrane. Its subcellular location is the virion. It carries out the reaction ATP + H2O = ADP + phosphate + H(+). In Ornithodoros (relapsing fever ticks), this protein is Putative RNA Helicase B962L.